Consider the following 264-residue polypeptide: tRNA (guanine-N(1)-)-methyltransferase (264 aa).

S-adenosyl-L-methionine is bound by residues G125 and L145 to L150.

This sequence belongs to the RNA methyltransferase TrmD family. In terms of assembly, homodimer.

It localises to the cytoplasm. The catalysed reaction is guanosine(37) in tRNA + S-adenosyl-L-methionine = N(1)-methylguanosine(37) in tRNA + S-adenosyl-L-homocysteine + H(+). Its function is as follows. Specifically methylates guanosine-37 in various tRNAs. In Burkholderia vietnamiensis (strain G4 / LMG 22486) (Burkholderia cepacia (strain R1808)), this protein is tRNA (guanine-N(1)-)-methyltransferase.